A 783-amino-acid chain; its full sequence is Putative ATP-dependent DNA helicase fml2 (783 aa).

The region spanning 118 to 286 is the Helicase ATP-binding domain; that stretch reads FCEQALFHNL…KVVDCLHISK (169 aa). 131-138 contacts ATP; the sequence is LPTGLGKT. Positions 234–237 match the DEAH box motif; sequence DEAH. Positions 450–619 constitute a Helicase C-terminal domain; that stretch reads KMNHLLELLK…GKKIALKKDV (170 aa).

The protein belongs to the DEAD box helicase family. DEAH subfamily. FANCM sub-subfamily.

Its subcellular location is the nucleus. The protein resides in the nucleolus. The enzyme catalyses ATP + H2O = ADP + phosphate + H(+). The sequence is that of Putative ATP-dependent DNA helicase fml2 from Schizosaccharomyces pombe (strain 972 / ATCC 24843) (Fission yeast).